Consider the following 399-residue polypeptide: S-adenosylmethionine synthase (399 aa).

Position 17 (His-17) interacts with ATP. A Mg(2+)-binding site is contributed by Asp-19. Glu-45 provides a ligand contact to K(+). The L-methionine site is built by Glu-58 and Gln-101. Positions 101 to 111 are flexible loop; sequence QSADIAMGVDQ. Residues 177–179, 244–245, Asp-253, 259–260, Ala-276, and Lys-280 contribute to the ATP site; these read DGK, RF, and RK. Asp-253 lines the L-methionine pocket. Residue Lys-284 participates in L-methionine binding.

Belongs to the AdoMet synthase family. Homotetramer; dimer of dimers. Requires Mg(2+) as cofactor. K(+) is required as a cofactor.

Its subcellular location is the cytoplasm. The catalysed reaction is L-methionine + ATP + H2O = S-adenosyl-L-methionine + phosphate + diphosphate. It participates in amino-acid biosynthesis; S-adenosyl-L-methionine biosynthesis; S-adenosyl-L-methionine from L-methionine: step 1/1. In terms of biological role, catalyzes the formation of S-adenosylmethionine (AdoMet) from methionine and ATP. The overall synthetic reaction is composed of two sequential steps, AdoMet formation and the subsequent tripolyphosphate hydrolysis which occurs prior to release of AdoMet from the enzyme. The chain is S-adenosylmethionine synthase from Bacillus thuringiensis subsp. konkukian (strain 97-27).